We begin with the raw amino-acid sequence, 390 residues long: Phosphopentomutase (390 aa).

6 residues coordinate Mn(2+): aspartate 12, aspartate 285, histidine 290, aspartate 326, histidine 327, and histidine 338.

This sequence belongs to the phosphopentomutase family. Mn(2+) serves as cofactor.

The protein localises to the cytoplasm. The catalysed reaction is 2-deoxy-alpha-D-ribose 1-phosphate = 2-deoxy-D-ribose 5-phosphate. The enzyme catalyses alpha-D-ribose 1-phosphate = D-ribose 5-phosphate. Its pathway is carbohydrate degradation; 2-deoxy-D-ribose 1-phosphate degradation; D-glyceraldehyde 3-phosphate and acetaldehyde from 2-deoxy-alpha-D-ribose 1-phosphate: step 1/2. Isomerase that catalyzes the conversion of deoxy-ribose 1-phosphate (dRib-1-P) and ribose 1-phosphate (Rib-1-P) to deoxy-ribose 5-phosphate (dRib-5-P) and ribose 5-phosphate (Rib-5-P), respectively. The chain is Phosphopentomutase from Brevibacillus brevis (strain 47 / JCM 6285 / NBRC 100599).